The following is a 500-amino-acid chain: UDP-N-acetylmuramoyl-L-alanyl-D-glutamate--2,6-diaminopimelate ligase (500 aa).

Residue Ser-32 coordinates UDP-N-acetyl-alpha-D-muramoyl-L-alanyl-D-glutamate. An ATP-binding site is contributed by 117–123; that stretch reads GTNGKTT. UDP-N-acetyl-alpha-D-muramoyl-L-alanyl-D-glutamate contacts are provided by residues 159–160, Ser-186, Gln-192, and Arg-194; that span reads TT. An N6-carboxylysine modification is found at Lys-226. Meso-2,6-diaminopimelate is bound by residues Arg-395, 419–422, Gly-470, and Glu-474; that span reads DNPR. Positions 419–422 match the Meso-diaminopimelate recognition motif motif; sequence DNPR.

Belongs to the MurCDEF family. MurE subfamily. Mg(2+) is required as a cofactor. Carboxylation is probably crucial for Mg(2+) binding and, consequently, for the gamma-phosphate positioning of ATP.

It localises to the cytoplasm. The catalysed reaction is UDP-N-acetyl-alpha-D-muramoyl-L-alanyl-D-glutamate + meso-2,6-diaminopimelate + ATP = UDP-N-acetyl-alpha-D-muramoyl-L-alanyl-gamma-D-glutamyl-meso-2,6-diaminopimelate + ADP + phosphate + H(+). Its pathway is cell wall biogenesis; peptidoglycan biosynthesis. Its function is as follows. Catalyzes the addition of meso-diaminopimelic acid to the nucleotide precursor UDP-N-acetylmuramoyl-L-alanyl-D-glutamate (UMAG) in the biosynthesis of bacterial cell-wall peptidoglycan. The polypeptide is UDP-N-acetylmuramoyl-L-alanyl-D-glutamate--2,6-diaminopimelate ligase (Parasynechococcus marenigrum (strain WH8102)).